The chain runs to 103 residues: Small ubiquitin-related modifier 2 (103 aa).

The Ubiquitin-like domain maps to A15–G92. Residue G92 forms a Glycyl lysine isopeptide (Gly-Lys) (interchain with K-? in acceptor proteins) linkage.

This sequence belongs to the ubiquitin family. SUMO subfamily. In terms of assembly, interacts with SAE2, SCE1, SIZ1 and MMS21. Interacts with HSFA2. Covalently attached to ABI5, FLD, GTE3, HSFA2 and ICE1.

It is found in the nucleus. It localises to the cytoplasm. In terms of biological role, ubiquitin-like protein which can be covalently attached to target lysines as a monomer. Does not seem to be involved in protein degradation and may function as an antagonist of ubiquitin in the degradation process. Required for the massive protein sumoylation in the nucleus induced by heat shock and controlled by SIZ1. The chain is Small ubiquitin-related modifier 2 from Arabidopsis thaliana (Mouse-ear cress).